The chain runs to 208 residues: Outer-membrane lipoprotein carrier protein (208 aa).

Residues 1 to 22 (MKKIFTIAALSLPLFCHLPAMA) form the signal peptide.

This sequence belongs to the LolA family. Monomer.

It localises to the periplasm. Its function is as follows. Participates in the translocation of lipoproteins from the inner membrane to the outer membrane. Only forms a complex with a lipoprotein if the residue after the N-terminal Cys is not an aspartate (The Asp acts as a targeting signal to indicate that the lipoprotein should stay in the inner membrane). The protein is Outer-membrane lipoprotein carrier protein of Shewanella pealeana (strain ATCC 700345 / ANG-SQ1).